We begin with the raw amino-acid sequence, 98 residues long: NADH-ubiquinone oxidoreductase chain 4L (98 aa).

Transmembrane regions (helical) follow at residues 2–22, 29–49, and 61–81; these read LSIS…MLMF, SLLC…LIIL, and ILLL…LVMV.

It belongs to the complex I subunit 4L family. Core subunit of respiratory chain NADH dehydrogenase (Complex I) which is composed of 45 different subunits.

Its subcellular location is the mitochondrion inner membrane. It carries out the reaction a ubiquinone + NADH + 5 H(+)(in) = a ubiquinol + NAD(+) + 4 H(+)(out). Core subunit of the mitochondrial membrane respiratory chain NADH dehydrogenase (Complex I) which catalyzes electron transfer from NADH through the respiratory chain, using ubiquinone as an electron acceptor. Part of the enzyme membrane arm which is embedded in the lipid bilayer and involved in proton translocation. The chain is NADH-ubiquinone oxidoreductase chain 4L (MT-ND4L) from Microcebus ravelobensis (Golden-brown mouse lemur).